A 1174-amino-acid chain; its full sequence is Pesticidal crystal protein Cry1Fa (1174 aa).

Belongs to the delta endotoxin family.

Functionally, promotes colloidosmotic lysis by binding to the midgut epithelial cells of many lepidopteran larvae. In Bacillus thuringiensis subsp. aizawai, this protein is Pesticidal crystal protein Cry1Fa (cry1Fa).